The sequence spans 840 residues: E3 ubiquitin-protein ligase SH3RF1 (840 aa).

The RING-type zinc-finger motif lies at 12–53 (CPVCLERLDASAKVLPCQHTFCKRCLLGIVGSRNELRCPECR). The interval 105-129 (VTCSPKDGPSSQGGPQPRAQAWSPP) is disordered. 2 SH3 domains span residues 134–193 (PQLP…IIKP) and 196–259 (QPPP…FNSA). Disordered stretches follow at residues 267–324 (DQPP…RHSM), 394–442 (TLNP…PRPS), 516–545 (GPASRGGVLANPPSTGGPAQKPPGNGVAGG), 578–633 (QARS…AASG), 652–723 (AASL…LGAE), and 744–773 (MAPGPQRRASSLDSAPVAPPPRQPCSSLGP). Residues 273 to 282 (GVAAGEGALA) are compositionally biased toward low complexity. The segment covering 283–292 (TTPSSTTTKQ) has biased composition (polar residues). The tract at residues 292 to 362 (QPDGKKNTKK…APSQVHISTT (71 aa)) is interaction with RAC1. Ser304 bears the Phosphoserine mark. 2 stretches are compositionally biased toward low complexity: residues 307 to 320 (SLSMASKASQAAQQ) and 405 to 424 (QAATPTGTAVAAAAGMGPRP). The interaction with AKT2 stretch occupies residues 434–537 (HPRPQPRPSV…PSTGGPAQKP (104 aa)). Positions 439 to 500 (PRPSVYVAIY…PGNYVAPVTR (62 aa)) constitute an SH3 3 domain. Pro residues predominate over residues 616-625 (SPQPPAPLGP). The span at 681 to 692 (RPDKDGKKEKKG) shows a compositional bias: basic and acidic residues. Residue Ser709 is modified to Phosphoserine. An SH3 4 domain is found at 781–840 (AVCERHRVVVSYPPQSEAELELKEGDIVFVHKKREDGWFKGTLQRNGKTGLFPGSFVENI).

It belongs to the SH3RF family. In terms of assembly, interacts with RAC1; in a GTP-dependent manner. Interacts with MAP3K10/MLK2 and MAP3K11/MLK3. Interacts with MAPK8IP; this interaction leads to the PJAC complex (POSH-JIP or SH3RF1/MAPK8IP apoptotic complex) with a 1:1 ratio. Interacts with SIAH1. Interacts with HERP1. Probably part of a signaling complex that may contain SH3RF1, MAPK8IP, DLK1, MAP2K4/MKK4, MAP2K7/MKK7, MAPK8/JNK1, MAPK9/JNK2, AKT1 and AKT2. Found in a complex with RAC2, MAP3K7/TAK1, MAP2K7/MKK7, MAPK8IP1/JIP1, MAPK8/JNK1 and MAPK9/JNK2. Found in a complex with RAC1, MAP3K11/MLK3, MAP2K7/MKK7, MAPK8IP1/JIP1 and MAPK8/JNK1. Interacts with SH3RF2. In terms of processing, phosphorylated at Ser-304 by AKT1 and AKT2. When phosphorylated, it has reduced ability to bind Rac. Post-translationally, autoubiquitinated. Ubiquitinated by SH3RF2, leading to proteasome-mediated degradation.

The protein resides in the cytoplasm. The protein localises to the perinuclear region. Its subcellular location is the cell projection. It localises to the lamellipodium. It is found in the golgi apparatus. The protein resides in the trans-Golgi network. It carries out the reaction S-ubiquitinyl-[E2 ubiquitin-conjugating enzyme]-L-cysteine + [acceptor protein]-L-lysine = [E2 ubiquitin-conjugating enzyme]-L-cysteine + N(6)-ubiquitinyl-[acceptor protein]-L-lysine.. It functions in the pathway protein modification; protein ubiquitination. Has E3 ubiquitin-protein ligase activity. In the absence of an external substrate, it can catalyze self-ubiquitination. Stimulates ubiquitination of potassium channel KCNJ1, enhancing it's dynamin-dependent and clathrin-independent endocytosis. Acts as a scaffold protein that coordinates with MAPK8IP1/JIP1 in organizing different components of the JNK pathway, including RAC1 or RAC2, MAP3K11/MLK3 or MAP3K7/TAK1, MAP2K7/MKK7, MAPK8/JNK1 and/or MAPK9/JNK2 into a functional multiprotein complex to ensure the effective activation of the JNK signaling pathway. Regulates the differentiation of CD4(+) and CD8(+) T-cells and promotes T-helper 1 (Th1) cell differentiation. Regulates the activation of MAPK8/JNK1 and MAPK9/JNK2 in CD4(+) T-cells and the activation of MAPK8/JNK1 in CD8(+) T-cells. Plays a crucial role in the migration of neocortical neurons in the developing brain. Controls proper cortical neuronal migration and the formation of proximal cytoplasmic dilation in the leading process (PCDLP) in migratory neocortical neurons by regulating the proper localization of activated RAC1 and F-actin assembly. The chain is E3 ubiquitin-protein ligase SH3RF1 (SH3RF1) from Bos taurus (Bovine).